Here is a 480-residue protein sequence, read N- to C-terminus: EGF-like repeat and discoidin I-like domain-containing protein 3 (480 aa).

The first 23 residues, 1–23, serve as a signal peptide directing secretion; the sequence is MKHLVAAWLLVGLSLGVPQFGKG. In terms of domain architecture, EGF-like 1 spans 24–60; it reads DICNPNPCENGGICLSGLADDSFSCECPEGFAGPNCS. 3 cysteine pairs are disulfide-bonded: cysteine 26–cysteine 37, cysteine 31–cysteine 48, and cysteine 50–cysteine 59. Threonine 73 is a glycosylation site (O-linked (GalNAc...) threonine). 2 EGF-like domains span residues 74-117 and 119-155; these read SAGP…IHCQ and NINECEAEPCRNGGICTDLVANYSCECPGEFMGRNCQ. 3 disulfides stabilise this stretch: cysteine 78-cysteine 89, cysteine 83-cysteine 105, and cysteine 107-cysteine 116. Residue threonine 88 is glycosylated (O-linked (Fuc...) threonine). The short motif at 96–98 is the Cell attachment site element; that stretch reads RGD. Residues asparagine 119, isoleucine 120, and glutamate 122 each coordinate Ca(2+). Intrachain disulfides connect cysteine 123–cysteine 134, cysteine 128–cysteine 143, cysteine 145–cysteine 154, cysteine 158–cysteine 314, cysteine 301–cysteine 305, and cysteine 319–cysteine 476. The Ca(2+) site is built by aspartate 136 and leucine 137. N-linked (GlcNAc...) asparagine glycosylation is present at asparagine 140. F5/8 type C domains are found at residues 158–314 and 319–476; these read CSGP…LLGC and CSEP…LLGC.

Expressed in angioblasts and early endothelial cells. By embryonic day 13.5, also expressed in a restricted group of non-endothelial cells including chondrocytes and retinal neurons.

Its subcellular location is the secreted. Functionally, promotes adhesion of endothelial cells through interaction with the alpha-v/beta-3 integrin receptor. Inhibits formation of vascular-like structures. May be involved in regulation of vascular morphogenesis of remodeling in embryonic development. The protein is EGF-like repeat and discoidin I-like domain-containing protein 3 (Edil3) of Mus musculus (Mouse).